The sequence spans 767 residues: Polyribonucleotide nucleotidyltransferase (767 aa).

Residues Asp-488 and Asp-494 each coordinate Mg(2+). In terms of domain architecture, KH spans 555 to 614 (PRLYTMKINPEKIRDVIGKGGSVIRALTEETGCQIDIGEDGTITIASTDADKAELAKKRI). Residues 624-692 (GKVYEGPVVK…EKGRIKLSMK (69 aa)) enclose the S1 motif domain. The segment covering 700-742 (GMEFEERAPRREGGFGDRGDRGDRGPRRDRGGDRPERGERPAR) has biased composition (basic and acidic residues). Positions 700–767 (GMEFEERAPR…QPQQQQGQQQ (68 aa)) are disordered. A compositionally biased stretch (low complexity) spans 752-767 (GAPAAGQPQQQQGQQQ).

This sequence belongs to the polyribonucleotide nucleotidyltransferase family. The cofactor is Mg(2+).

Its subcellular location is the cytoplasm. The catalysed reaction is RNA(n+1) + phosphate = RNA(n) + a ribonucleoside 5'-diphosphate. Involved in mRNA degradation. Catalyzes the phosphorolysis of single-stranded polyribonucleotides processively in the 3'- to 5'-direction. This Leptothrix cholodnii (strain ATCC 51168 / LMG 8142 / SP-6) (Leptothrix discophora (strain SP-6)) protein is Polyribonucleotide nucleotidyltransferase.